The primary structure comprises 514 residues: Steroid 17-alpha-hydroxylase/17,20 lyase (514 aa).

Cys-445 serves as a coordination point for heme.

Belongs to the cytochrome P450 family. The cofactor is heme.

The protein localises to the membrane. It catalyses the reaction a C21-steroid + reduced [NADPH--hemoprotein reductase] + O2 = a 17alpha-hydroxy-C21-steroid + oxidized [NADPH--hemoprotein reductase] + H2O + H(+). It carries out the reaction 17alpha-hydroxyprogesterone + reduced [NADPH--hemoprotein reductase] + O2 = androst-4-ene-3,17-dione + acetate + oxidized [NADPH--hemoprotein reductase] + H2O + 2 H(+). The catalysed reaction is 17alpha-hydroxypregnenolone + reduced [NADPH--hemoprotein reductase] + O2 = 3beta-hydroxyandrost-5-en-17-one + acetate + oxidized [NADPH--hemoprotein reductase] + H2O + 2 H(+). The protein operates within lipid metabolism; steroid biosynthesis. Its function is as follows. Conversion of pregnenolone and progesterone to their 17-alpha-hydroxylated products and subsequently to dehydroepiandrosterone (DHEA) and androstenedione. Catalyzes both the 17-alpha-hydroxylation and the 17,20-lyase reaction. This Ictalurus punctatus (Channel catfish) protein is Steroid 17-alpha-hydroxylase/17,20 lyase (cyp17a1).